Consider the following 2065-residue polypeptide: WD repeat-containing protein 81 (2065 aa).

The BEACH domain occupies L325–V617. Disordered stretches follow at residues E1082–G1111, T1156–R1230, G1271–E1290, and A1595–I1642. Over residues K1101–G1111 the composition is skewed to gly residues. Polar residues predominate over residues T1156–N1169. The span at D1213–E1228 shows a compositional bias: acidic residues. The segment covering S1624–P1637 has biased composition (low complexity). WD repeat units lie at residues G1767–R1806, T1813–C1853, L1906–G1945, G1948–Q1986, and N2035–A2065.

This sequence belongs to the WD repeat WDR81 family. In terms of tissue distribution, widely expressed.

It is found in the early endosome membrane. Its subcellular location is the late endosome membrane. The protein localises to the lysosome membrane. The protein resides in the cytoplasmic vesicle. It localises to the autophagosome membrane. It is found in the mitochondrion. Its subcellular location is the cytoplasm. The protein localises to the cytosol. Functionally, functions as a negative regulator of the PI3 kinase/PI3K activity associated with endosomal membranes. By modifying the phosphatidylinositol 3-phosphate/PtdInsP3 content of endosomal membranes may regulate endosome fusion, recycling, sorting and early to late endosome transport. May also play a role in aggrephagy, the macroautophagic degradation of ubiquitinated protein aggregates. May also be involved in maintenance of normal mitochondrial structure and organization. The protein is WD repeat-containing protein 81 (wdr81) of Danio rerio (Zebrafish).